The chain runs to 81 residues: MPKADIHPTWYPDAKVTCNGEVIMTVGSTKPEINVEIWSGNHPFYTGTQKIIDTEGRVDRFMRKYGMKEKTTGDKQDKKKK.

Belongs to the bacterial ribosomal protein bL31 family. Type A subfamily. In terms of assembly, part of the 50S ribosomal subunit.

Its function is as follows. Binds the 23S rRNA. This chain is Large ribosomal subunit protein bL31, found in Synechocystis sp. (strain ATCC 27184 / PCC 6803 / Kazusa).